The chain runs to 671 residues: Anaphase-promoting complex subunit cut9 (671 aa).

A disordered region spans residues 1–24; the sequence is MVVKRTQTDSRMQSTPGNHNHPDA. TPR repeat units follow at residues 83-114, 117-142, 150-173, 198-229, 234-257, 268-296, 306-334, 341-368, 373-402, 407-435, 442-470, 475-507, 513-545, and 550-579; these read REDY…LDIT, PNDA…LLTK, SACR…LNLL, LEAS…ALMV, YEAF…LVLK, AAFL…DYLS, DLLL…ILEI, VYPL…LVDR, AVTW…SSTM, GPAW…TAAR, LPYL…SYAL, PLLL…LVKK, KPWA…GLLL, and ANVH…SLAI. Residues 622–643 are disordered; that stretch reads NLNTSDKSMSMEDQSGKVTESV.

In terms of assembly, the APC/C is composed of at least 13 subunits: apc1, apc2, nuc2, apc4, apc5, cut9, apc8, apc10, apc11, hcn1, apc13, apc14 and apc15. Homodimer. Interacts directly with nuc2 and hcn1. Phosphorylated.

Its subcellular location is the nucleus. In terms of biological role, component of the anaphase-promoting complex/cyclosome (APC/C), a cell cycle-regulated E3 ubiquitin-protein ligase complex that controls progression through mitosis and the G1 phase of the cell cycle. The APC/C is thought to confer substrate specificity and, in the presence of ubiquitin-conjugating E2 enzymes, it catalyzes the formation of protein-ubiquitin conjugates that are subsequently degraded by the 26S proteasome. May play a pivotal role in the control of anaphase. This is Anaphase-promoting complex subunit cut9 (cut9) from Schizosaccharomyces pombe (strain 972 / ATCC 24843) (Fission yeast).